A 276-amino-acid polypeptide reads, in one-letter code: Large ribosomal subunit protein uL2 (276 aa).

Positions 221–276 are disordered; the sequence is RGSAMNPNDHPHGGGEGRAPIGRKSPMTPWGKKARGIKTRDRKKSSNELIIRRRTK. The segment covering 252-263 has biased composition (basic residues); that stretch reads KKARGIKTRDRK.

The protein belongs to the universal ribosomal protein uL2 family. As to quaternary structure, part of the 50S ribosomal subunit. Forms a bridge to the 30S subunit in the 70S ribosome.

Functionally, one of the primary rRNA binding proteins. Required for association of the 30S and 50S subunits to form the 70S ribosome, for tRNA binding and peptide bond formation. It has been suggested to have peptidyltransferase activity; this is somewhat controversial. Makes several contacts with the 16S rRNA in the 70S ribosome. This Phytoplasma australiense protein is Large ribosomal subunit protein uL2.